Reading from the N-terminus, the 463-residue chain is Asparagine--tRNA ligase (463 aa).

It belongs to the class-II aminoacyl-tRNA synthetase family. As to quaternary structure, homodimer.

It is found in the cytoplasm. The catalysed reaction is tRNA(Asn) + L-asparagine + ATP = L-asparaginyl-tRNA(Asn) + AMP + diphosphate + H(+). The polypeptide is Asparagine--tRNA ligase (Clostridium botulinum (strain ATCC 19397 / Type A)).